The chain runs to 171 residues: Adenine phosphoribosyltransferase (171 aa).

The protein belongs to the purine/pyrimidine phosphoribosyltransferase family. Homodimer.

Its subcellular location is the cytoplasm. The catalysed reaction is AMP + diphosphate = 5-phospho-alpha-D-ribose 1-diphosphate + adenine. It functions in the pathway purine metabolism; AMP biosynthesis via salvage pathway; AMP from adenine: step 1/1. Its function is as follows. Catalyzes a salvage reaction resulting in the formation of AMP, that is energically less costly than de novo synthesis. The sequence is that of Adenine phosphoribosyltransferase from Pelotomaculum thermopropionicum (strain DSM 13744 / JCM 10971 / SI).